The chain runs to 24 residues: Arginine attenuator peptide (24 aa).

This sequence belongs to the arginine attenuator peptide family.

Arginine attenuator peptide (AAP) that has a regulatory role in the production of arginine-specific carbamoyl phosphate synthetase. Encoded by an upstream open reading frame (uORF) within the 5'-leader region of arginine-specific carbamoyl phosphate synthetase small chain (arg-2) mRNA, it attenuates the translation of the downstream arg-2 ORF. In the presence of high concentrations of arginine, ribosomes translating the uORF encoding AAP stall at the termination codon, resulting in reduced translation from the downstream arg-2 initiation codon. This Neurospora crassa (strain ATCC 24698 / 74-OR23-1A / CBS 708.71 / DSM 1257 / FGSC 987) protein is Arginine attenuator peptide.